A 548-amino-acid chain; its full sequence is ATP synthase subunit alpha (548 aa).

172 to 179 (GDRKTGKT) contributes to the ATP binding site. Residues 526-548 (AEAMDEADVEKESVKVRKPAPKK) form a disordered region.

Belongs to the ATPase alpha/beta chains family. In terms of assembly, F-type ATPases have 2 components, CF(1) - the catalytic core - and CF(0) - the membrane proton channel. CF(1) has five subunits: alpha(3), beta(3), gamma(1), delta(1), epsilon(1). CF(0) has three main subunits: a(1), b(2) and c(9-12). The alpha and beta chains form an alternating ring which encloses part of the gamma chain. CF(1) is attached to CF(0) by a central stalk formed by the gamma and epsilon chains, while a peripheral stalk is formed by the delta and b chains.

The protein resides in the cell membrane. The catalysed reaction is ATP + H2O + 4 H(+)(in) = ADP + phosphate + 5 H(+)(out). In terms of biological role, produces ATP from ADP in the presence of a proton gradient across the membrane. The alpha chain is a regulatory subunit. This chain is ATP synthase subunit alpha, found in Mycolicibacterium gilvum (strain PYR-GCK) (Mycobacterium gilvum (strain PYR-GCK)).